Reading from the N-terminus, the 267-residue chain is Ubiquinone biosynthesis protein COQ4 homolog, mitochondrial (267 aa).

Positions 170, 171, 174, and 186 each coordinate Zn(2+).

This sequence belongs to the COQ4 family. As to quaternary structure, component of a multi-subunit COQ enzyme complex. It depends on Zn(2+) as a cofactor.

The protein localises to the mitochondrion inner membrane. The catalysed reaction is a 4-hydroxy-3-methoxy-5-(all-trans-polyprenyl)benzoate + H(+) = a 2-methoxy-6-(all-trans-polyprenyl)phenol + CO2. It functions in the pathway cofactor biosynthesis; ubiquinone biosynthesis. In terms of biological role, lyase that catalyzes the C1-decarboxylation of 4-hydroxy-3-methoxy-5-(all-trans-polyprenyl)benzoic acid into 2-methoxy-6-(all-trans-polyprenyl)phenol during ubiquinone biosynthesis. The polypeptide is Ubiquinone biosynthesis protein COQ4 homolog, mitochondrial (Drosophila pseudoobscura pseudoobscura (Fruit fly)).